Reading from the N-terminus, the 981-residue chain is Colossin-C (981 aa).

A signal peptide spans 1-23 (MKILYSLLLISSIILNTVLNISS). Asn63 carries an N-linked (GlcNAc...) asparagine glycan. The tract at residues 172–195 (EQTQPPTQPPTQPPTQPPTPPPFT) is disordered. Over residues 177–194 (PTQPPTQPPTQPPTPPPF) the composition is skewed to pro residues. N-linked (GlcNAc...) asparagine glycans are attached at residues Asn222, Asn591, and Asn811.

This sequence belongs to the serine-aspartate repeat-containing protein (SDr) family.

The protein localises to the secreted. This chain is Colossin-C (colC), found in Dictyostelium discoideum (Social amoeba).